The primary structure comprises 192 residues: Ion-translocating oxidoreductase complex subunit A (192 aa).

6 consecutive transmembrane segments (helical) span residues L5 to L25, I39 to V59, L65 to V85, A102 to L122, A134 to M154, and A171 to V191.

The protein belongs to the NqrDE/RnfAE family. In terms of assembly, the complex is composed of six subunits: RnfA, RnfB, RnfC, RnfD, RnfE and RnfG.

Its subcellular location is the cell inner membrane. Functionally, part of a membrane-bound complex that couples electron transfer with translocation of ions across the membrane. This Shewanella baltica (strain OS185) protein is Ion-translocating oxidoreductase complex subunit A.